Consider the following 486-residue polypeptide: Cardiolipin synthase A (486 aa).

2 helical membrane-spanning segments follow: residues 3–23 (TVYTLVSWLAILGYWLLIAGV) and 38–58 (MAWLLIIYILPLVGIIAYLAV). 2 PLD phosphodiesterase domains span residues 219 to 246 (MDLRQHRKMIMIDNYIAYTGSMNMVDPR) and 399 to 426 (EGGLLHTKSVLVDGELSLVGTVNLDMRS). Catalysis depends on residues His-224, Lys-226, Asp-231, His-404, Lys-406, and Asp-411.

It belongs to the phospholipase D family. Cardiolipin synthase subfamily. ClsA sub-subfamily.

It is found in the cell inner membrane. The catalysed reaction is 2 a 1,2-diacyl-sn-glycero-3-phospho-(1'-sn-glycerol) = a cardiolipin + glycerol. In terms of biological role, catalyzes the reversible phosphatidyl group transfer from one phosphatidylglycerol molecule to another to form cardiolipin (CL) (diphosphatidylglycerol) and glycerol. This is Cardiolipin synthase A from Shigella flexneri.